The following is a 324-amino-acid chain: Ig gamma-1 chain C region secreted form (324 aa).

Residues 1–97 (AKTTPPSVYP…ASSTKVDKKI (97 aa)) are CH1. C27 and C82 are oxidised to a cystine. Residues 98–110 (VPRDCGCKPCICT) form a hinge region. The segment at 111-217 (VPEVSSVFIF…PIEKTISKTK (107 aa)) is CH2. Cystine bridges form between C138-C198 and C244-C302. A glycan (N-linked (GlcNAc...) asparagine) is linked at N174. The segment at 218–324 (GRPKAPQVYT…EKSLSHSPGK (107 aa)) is CH3.

It localises to the secreted. This chain is Ig gamma-1 chain C region secreted form (Ighg1), found in Mus musculus (Mouse).